Consider the following 265-residue polypeptide: MLENICINFKKVKEKTPLVHSITNYVTINDCANMLLAYGASPAMVESFDESYDFAKLASCIYINLGTLTREQEQSILMVCISAKNNNIPVVLDPVACGAVPHKIALIEKLFEIGRIDIIKGNIGEIKSLAGYNAKTRGVDSIDNGNDSIDACISLAKKYKCIVAATGVKDIVTDGKRTALIENGSKMLTLITGAGCMVGALTAATAGVEDDKFIATITSILSMNIAAEHTEKEVIGPGSFKVKLIDNIYLLKENHLRKEGKIKWI.

Substrate is bound at residue Met44. ATP-binding residues include Lys120 and Thr166. Residue Gly193 coordinates substrate.

Belongs to the Thz kinase family. The cofactor is Mg(2+).

The catalysed reaction is 5-(2-hydroxyethyl)-4-methylthiazole + ATP = 4-methyl-5-(2-phosphooxyethyl)-thiazole + ADP + H(+). The protein operates within cofactor biosynthesis; thiamine diphosphate biosynthesis; 4-methyl-5-(2-phosphoethyl)-thiazole from 5-(2-hydroxyethyl)-4-methylthiazole: step 1/1. Its function is as follows. Catalyzes the phosphorylation of the hydroxyl group of 4-methyl-5-beta-hydroxyethylthiazole (THZ). In Clostridium novyi (strain NT), this protein is Hydroxyethylthiazole kinase.